We begin with the raw amino-acid sequence, 101 residues long: Small ribosomal subunit protein uS10 (101 aa).

Belongs to the universal ribosomal protein uS10 family. Part of the 30S ribosomal subunit.

Its function is as follows. Involved in the binding of tRNA to the ribosomes. This chain is Small ribosomal subunit protein uS10, found in Bacteroides fragilis (strain ATCC 25285 / DSM 2151 / CCUG 4856 / JCM 11019 / LMG 10263 / NCTC 9343 / Onslow / VPI 2553 / EN-2).